Consider the following 319-residue polypeptide: N-acetylneuraminate lyase (319 aa).

Aceneuramate-binding residues include Thr51 and Thr52. The Proton donor role is filled by Tyr143. Catalysis depends on Lys173, which acts as the Schiff-base intermediate with substrate. Ser175, Gly199, Asp201, Glu202, and Ser218 together coordinate aceneuramate.

Belongs to the DapA family. NanA subfamily. In terms of assembly, homotetramer.

The protein localises to the cytoplasm. It catalyses the reaction aceneuramate = aldehydo-N-acetyl-D-mannosamine + pyruvate. It functions in the pathway amino-sugar metabolism; N-acetylneuraminate degradation. Functionally, catalyzes the cleavage of N-acetylneuraminic acid (sialic acid) to form pyruvate and N-acetylmannosamine via a Schiff base intermediate. It prevents sialic acids from being recycled and returning to the cell surface. Involved in the N-glycolylneuraminic acid (Neu5Gc) degradation pathway. This is N-acetylneuraminate lyase from Sus scrofa (Pig).